The following is a 117-amino-acid chain: Small ribosomal subunit protein bS6 (117 aa).

A disordered region spans residues 96 to 117 (HAEGPSVQMQKRDERDSRRERR). Positions 105-117 (QKRDERDSRRERR) are enriched in basic and acidic residues.

It belongs to the bacterial ribosomal protein bS6 family.

In terms of biological role, binds together with bS18 to 16S ribosomal RNA. This chain is Small ribosomal subunit protein bS6, found in Ruegeria pomeroyi (strain ATCC 700808 / DSM 15171 / DSS-3) (Silicibacter pomeroyi).